The primary structure comprises 267 residues: Cilia- and flagella-associated protein 300 (267 aa).

Belongs to the CFAP300 family. As to quaternary structure, interacts with DNAAF2. In terms of tissue distribution, expressed in the left-right organiser (LRO) node at 8.25 dpc.

It is found in the cytoplasm. The protein resides in the cytoskeleton. Its subcellular location is the cilium axoneme. Its function is as follows. Cilium- and flagellum-specific protein that plays a role in axonemal structure organization and motility. May play a role in outer and inner dynein arm assembly. This chain is Cilia- and flagella-associated protein 300, found in Mus musculus (Mouse).